The following is a 290-amino-acid chain: Syntaxin-2 (290 aa).

Over 1-266 (MRDRLPDLTA…KYQSKARRKK (266 aa)) the chain is Cytoplasmic. Residue serine 14 is modified to Phosphoserine. The stretch at 69 to 106 (EGKIKEELEDLNKEIKKTANRIRGKLKAIEQSCDQDEN) forms a coiled coil. Residues 193–255 (LNEIESRHKD…EHAKEETKKA (63 aa)) form the t-SNARE coiled-coil homology domain. Residues 267-290 (WIIAAVVVAVIAVLALIIGLTVGK) form a helical; Anchor for type IV membrane protein membrane-spanning segment.

The protein belongs to the syntaxin family. Interacts with SYT6 and SYT8; the interaction is Ca(2+)-dependent. In terms of tissue distribution, heart, spleen, liver, and testis.

The protein resides in the membrane. Functionally, essential for epithelial morphogenesis. May mediate Ca(2+)-regulation of exocytosis acrosomal reaction in sperm. In Rattus norvegicus (Rat), this protein is Syntaxin-2 (Stx2).